A 451-amino-acid chain; its full sequence is Glycine--tRNA ligase (451 aa).

Positions 99 and 168 each coordinate substrate. ATP-binding positions include 200–202 (RNE), 210–215 (FRTREF), 284–285 (EL), and 328–331 (GLDR). Residue 215–219 (FEQME) coordinates substrate. 324–328 (EPSVG) provides a ligand contact to substrate.

The protein belongs to the class-II aminoacyl-tRNA synthetase family. In terms of assembly, homodimer.

It localises to the cytoplasm. The enzyme catalyses tRNA(Gly) + glycine + ATP = glycyl-tRNA(Gly) + AMP + diphosphate. Catalyzes the attachment of glycine to tRNA(Gly). This Mycoplasmopsis synoviae (strain 53) (Mycoplasma synoviae) protein is Glycine--tRNA ligase.